Consider the following 299-residue polypeptide: GTPase Era (299 aa).

In terms of domain architecture, Era-type G spans 5–172; sequence KSGFVSIIGR…IDVLKTYLPE (168 aa). A G1 region spans residues 13–20; it reads GRPNVGKS. A GTP-binding site is contributed by 13–20; sequence GRPNVGKS. Positions 39–43 are G2; that stretch reads QTTRN. A G3 region spans residues 60–63; it reads DTPG. Residues 60-64 and 122-125 each bind GTP; these read DTPGI and NKID. Positions 122 to 125 are G4; it reads NKID. The interval 151–153 is G5; that stretch reads ISA. Residues 203-280 form the KH type-2 domain; sequence TSEEIPHAIG…YLELWVKVQR (78 aa).

This sequence belongs to the TRAFAC class TrmE-Era-EngA-EngB-Septin-like GTPase superfamily. Era GTPase family. As to quaternary structure, monomer.

Its subcellular location is the cytoplasm. The protein localises to the cell membrane. Its function is as follows. An essential GTPase that binds both GDP and GTP, with rapid nucleotide exchange. Plays a role in 16S rRNA processing and 30S ribosomal subunit biogenesis and possibly also in cell cycle regulation and energy metabolism. The polypeptide is GTPase Era (Staphylococcus aureus (strain bovine RF122 / ET3-1)).